The primary structure comprises 208 residues: Probable Brix domain-containing ribosomal biogenesis protein (208 aa).

A Brix domain is found at 1-196 (MMLITTSHRP…IWIMEDGRRW (196 aa)).

Functionally, probably involved in the biogenesis of the ribosome. The sequence is that of Probable Brix domain-containing ribosomal biogenesis protein from Thermococcus kodakarensis (strain ATCC BAA-918 / JCM 12380 / KOD1) (Pyrococcus kodakaraensis (strain KOD1)).